The following is a 517-amino-acid chain: MKLQGSLACLLLALCLGGGAANPLHSGGEGTGASAAHGAGDAISHGIGEAVGQGAKEAASSGIQNALGQGHGEEGGSTLMGSRGDVFEHRLGEAARSLGNAGNEIGRQAEDIIRQGVDAVHNAGSWGTSGGHGAYGSQGGAGVQGNPGPQGTPWASGGNYGTNSLGGSVGQGGNGGPLDYETNAQGAVAQPGYGTVRGNNQNSGCTNPPPSGSHESFSNSGGSSNDGSRGSQGSHGSNGQGSSGRGGGQGNSDNNGSSSSSSGSNSGNSNSGNSGNSNSGNSGNSGSGSRDIETSNFDEGYSVSRGTGSRGGSGGSGGSGGSGGSGGSGGGNKPECNNPGNDVRMAGGSGSQGHGSNGGNIQKEAVNGLNTMNSDASTLPFNIDNFWENLKSKTRFINWDAINKGHAPSPSTRALLYFRKLWENFKRSTPFFNWKQIEGSDLSSLQKRAGGADQFSKPEARQDLSADSSKNYYNNQQVNPTYNWQYYTKTTAKAGVTPSSSSASRAQPGLLKWLKFW.

A signal peptide spans 1–21 (MKLQGSLACLLLALCLGGGAA). 2 disordered regions span residues 51–83 (VGQG…MGSR) and 123–364 (AGSW…IQKE). Gly residues-rich tracts occupy residues 127–145 (GTSG…GVQG) and 167–176 (GSVGQGGNGG). Residues 197-206 (RGNNQNSGCT) are compositionally biased toward polar residues. A compositionally biased stretch (low complexity) spans 212–235 (GSHESFSNSGGSSNDGSRGSQGSH). Positions 236–250 (GSNGQGSSGRGGGQG) are enriched in gly residues. The span at 251–289 (NSDNNGSSSSSSGSNSGNSNSGNSGNSNSGNSGNSGSGS) shows a compositional bias: low complexity. 2 stretches are compositionally biased toward gly residues: residues 308–332 (GSRG…GGGN) and 347–358 (GGSGSQGHGSNG).

The protein belongs to the dermokine family. In terms of assembly, homooligomer. Seems to be able to homodimerize and homotrimerize. In terms of processing, O-glycosylated. In terms of tissue distribution, highly expressed in stratified epithelia; such as the skin, tongue, esophagus, forestomach and vagina. Also found in lung, trachea and urinary bladder.

The protein localises to the secreted. Functionally, may act as a soluble regulator of keratinocyte differentiation. This chain is Dermokine (Dmkn), found in Mus musculus (Mouse).